The following is a 328-amino-acid chain: V-set and immunoglobulin domain-containing protein 2 (328 aa).

An N-terminal signal peptide occupies residues 1-24 (MAWPLVGAFLCGHLLGFVCLSGLA). Residues 25-138 (VEVTVPTEPL…DFYTNGLGLI (114 aa)) enclose the Ig-like V-type domain. Residues 25 to 244 (VEVTVPTEPL…VTDSSEGRVA (220 aa)) are Extracellular-facing. A disulfide bridge connects residues cysteine 46 and cysteine 122. N-linked (GlcNAc...) asparagine glycans are attached at residues asparagine 139, asparagine 207, and asparagine 232. The 90-residue stretch at 145–234 (PPSHPLCSQS…GSASCELNLS (90 aa)) folds into the Ig-like C2-type domain. Cysteine 167 and cysteine 218 are disulfide-bonded. Residues 245–265 (GTLIGVLLGVLLLSVAAFCLI) form a helical membrane-spanning segment. At 266–328 (RFQKERKKEP…TTKSKLSMVV (63 aa)) the chain is on the cytoplasmic side.

In terms of tissue distribution, expressed in the stomach, colon and prostate.

The protein resides in the membrane. The polypeptide is V-set and immunoglobulin domain-containing protein 2 (Vsig2) (Mus musculus (Mouse)).